A 1235-amino-acid chain; its full sequence is Receptor-type adenylate cyclase ESAG 4 (1235 aa).

The tract at residues 1–20 (MNMLHLSDRNASLAPSGGEH) is disordered. The Cytoplasmic segment spans residues 1-32 (MNMLHLSDRNASLAPSGGEHSLPTGGAVCRDA). A helical transmembrane segment spans residues 33–53 (MDILPVILRAPVALLLLLVVL). The Extracellular portion of the chain corresponds to 54–858 (PQLSVGAEAN…SNAGRISGAS (805 aa)). N-linked (GlcNAc...) asparagine glycans are attached at residues Asn-63, Asn-90, Asn-97, Asn-362, Asn-531, Asn-566, Asn-705, and Asn-830. The helical transmembrane segment at 859 to 879 (LVGIIIGGALALFLVVALGVV) threads the bilayer. Residues 880–1235 (PYFFLRNTVI…VSSQVEERLL (356 aa)) are Cytoplasmic-facing. A Guanylate cyclase domain is found at 900 to 1054 (TLIFTDIESS…RTSNMAARTE (155 aa)). Mg(2+) contacts are provided by Asp-905 and Asp-948.

This sequence belongs to the adenylyl cyclase class-3 family. Requires Mg(2+) as cofactor.

The protein resides in the membrane. It catalyses the reaction ATP = 3',5'-cyclic AMP + diphosphate. Functionally, could act as a receptor for an unknown ligand. The chain is Receptor-type adenylate cyclase ESAG 4 (ESAG4) from Trypanosoma brucei brucei.